The primary structure comprises 669 residues: DNA ligase (669 aa).

NAD(+) is bound by residues 34 to 38, 83 to 84, and glutamate 114; these read DAEYD and SL. Lysine 116 acts as the N6-AMP-lysine intermediate in catalysis. Residues arginine 137, glutamate 171, lysine 287, and lysine 311 each coordinate NAD(+). Residues cysteine 405, cysteine 408, cysteine 423, and cysteine 428 each coordinate Zn(2+). Residues 591-669 form the BRCT domain; the sequence is NVESYFAGKT…EERFLQELNK (79 aa).

The protein belongs to the NAD-dependent DNA ligase family. LigA subfamily. The cofactor is Mg(2+). Mn(2+) serves as cofactor.

It carries out the reaction NAD(+) + (deoxyribonucleotide)n-3'-hydroxyl + 5'-phospho-(deoxyribonucleotide)m = (deoxyribonucleotide)n+m + AMP + beta-nicotinamide D-nucleotide.. Functionally, DNA ligase that catalyzes the formation of phosphodiester linkages between 5'-phosphoryl and 3'-hydroxyl groups in double-stranded DNA using NAD as a coenzyme and as the energy source for the reaction. It is essential for DNA replication and repair of damaged DNA. The sequence is that of DNA ligase from Bacillus cereus (strain AH820).